The sequence spans 134 residues: Profilin-2 (134 aa).

Cys-13 and Cys-118 are disulfide-bonded. The short motif at 84-100 is the Involved in PIP2 interaction element; the sequence is AVIRGKKGAGGITIKKT. Thr-114 is modified (phosphothreonine).

The protein belongs to the profilin family. In terms of assembly, occurs in many kinds of cells as a complex with monomeric actin in a 1:1 ratio. Post-translationally, phosphorylated by MAP kinases.

The protein localises to the cytoplasm. The protein resides in the cytoskeleton. In terms of biological role, binds to actin and affects the structure of the cytoskeleton. At high concentrations, profilin prevents the polymerization of actin, whereas it enhances it at low concentrations. In Olea europaea (Common olive), this protein is Profilin-2.